A 199-amino-acid chain; its full sequence is Prolactin (199 aa).

A disulfide bridge links C4 with C11. Residues S26, S34, and S90 each carry the phosphoserine modification. 2 disulfide bridges follow: C58/C174 and C191/C199.

Belongs to the somatotropin/prolactin family. In terms of assembly, interacts with PRLR.

It localises to the secreted. Prolactin acts primarily on the mammary gland by promoting lactation. This Loxodonta africana (African elephant) protein is Prolactin (PRL).